The chain runs to 322 residues: MCIIADSVKNVSNTKIASFHVAYSVDNNKNMIPSQLIVYAAKIDSTVSSNAIILPVYNPGNDSSKIIPLDLSNFSDFFDKLSTIYGRWFIDDNKIQALSYRNGQISVTNSILQVYTVGDYRFSIMPSKKYFNNLDKSQLNVDPRSKISIDQHNNDYSFIVFQFYQKGVIDITPFGYLCPTNSTSQIVPTIHGHPENNDFMPMDMGINISRMQVFSSIDQFNTPIGGRHNNNFENEAEFDHEIYLLVKDTISAGKSTTQDVIDINNLLKKITHDYANNQIRLFVPKNFIPGKIKITGKKPNRNIFVGPNNYRFMNDLLIDNQK.

This is an uncharacterized protein from Acanthamoeba polyphaga mimivirus (APMV).